Here is a 620-residue protein sequence, read N- to C-terminus: Aspartic protease 1 (620 aa).

The Cytoplasmic portion of the chain corresponds to 1–110 (MSPSSRFRNL…LGKAVGLSTS (110 aa)). A propeptide spanning residues 1–258 (MSPSSRFRNL…SKKDDGNLSG (258 aa)) is cleaved from the precursor. Positions 27–31 (YASLL) are important for proper cellular trafficking. The helical; Signal-anchor for type II membrane protein transmembrane segment at 111 to 131 (VICVVALFGIVCLCLYGLVNF) threads the bilayer. Residues 132 to 620 (SFTSVETSPL…KQIGFARLKN (489 aa)) are Lumenal-facing. The interval 138-174 (TSPLDDPRNSPVMGELGNPQASTPSSARADTPARHDR) is disordered. Polar residues predominate over residues 156-165 (PQASTPSSAR). Residues 275–616 (YYTEIYVGSP…DYDNKQIGFA (342 aa)) form the Peptidase A1 domain. Residues Asp293 and Asp476 contribute to the active site. Cys513 and Cys550 form a disulfide bridge.

The protein belongs to the peptidase A1 family. In terms of processing, proteolytically cleaved into the soluble active mature form by, at least, cysteine protease CPL. Undergoes at least four processing steps; the first cleavage removes the propeptide resulting in the production of a soluble 45 kDa protein, which is further processed into a 35 kDa form followed by an additional processing into the final active 30 kDa form.

It localises to the membrane. It is found in the vacuole. In terms of biological role, aspartyl protease which is dispensable for protein degradation in the vacuolar compartment (VAC) or for tachyzoite and bradyzoite viability. This Toxoplasma gondii protein is Aspartic protease 1.